A 566-amino-acid polypeptide reads, in one-letter code: Chondroitin sulfate proteoglycan 5 (566 aa).

An N-terminal signal peptide occupies residues 1-30; that stretch reads MGRAGGGGPDWGPPPVLLLLGVTLVLTAGA. The Extracellular segment spans residues 31 to 423; the sequence is VPARETGSAI…SIITDFQVMC (393 aa). O-linked (Xyl...) (chondroitin sulfate) serine glycosylation occurs at Ser-38. Positions 56-93 are disordered; that stretch reads ANDTREEAGLPAAGEDETSWTERGSEMAAVGPGVGPEE. Asn-57 carries an N-linked (GlcNAc...) asparagine glycan. Thr-76 carries O-linked (GalNAc...) threonine glycosylation. A glycan (O-linked (Xyl...) (chondroitin sulfate) serine) is linked at Ser-123. Thr-132 carries O-linked (GalNAc...) threonine glycosylation. Disordered regions lie at residues 137-173, 218-249, and 263-327; these read DEAL…GPEL, DSEG…TPSW, and ESDF…PPQH. The O-linked (GalNAc...) serine glycan is linked to Ser-143. Residues Thr-144, Thr-153, and Thr-155 are each glycosylated (O-linked (GalNAc...) threonine). Residues Ser-156 and Ser-160 are each glycosylated (O-linked (GalNAc...) serine). Residues 163 to 173 are compositionally biased toward basic and acidic residues; sequence VHDKPSVGPEL. Thr-235 carries an O-linked (GalNAc...) threonine glycan. Residues 265-301 form an interaction with TNC and TNR region; that stretch reads DFYPTTSFYDDLEEEEEEEEDKDTVGGGDLEDENDLL. Over residues 274–286 the composition is skewed to acidic residues; sequence DDLEEEEEEEEDK. 2 N-linked (GlcNAc...) asparagine glycosylation sites follow: Asn-355 and Asn-367. In terms of domain architecture, EGF-like spans 371 to 413; that stretch reads RSVCDLFPSYCHNGGQCYLVENIGAFCRCNTQDYIWHKGMRCE. 3 disulfide bridges follow: Cys-374-Cys-387, Cys-381-Cys-397, and Cys-399-Cys-412. Gly-394 and Phe-396 each carry phosphoserine. Position 397 is a phosphothreonine (Cys-397). A helical transmembrane segment spans residues 424 to 444; the sequence is VAVGSAALVLLLLFMMTVFFA. The tract at residues 442-460 is interaction with GOPC; that stretch reads FFAKKLYLLKTENTKLRRT. The Cytoplasmic portion of the chain corresponds to 445–566; the sequence is KKLYLLKTEN…GVNCLQNNLT (122 aa). Phosphoserine occurs at positions 467, 475, and 477. At Thr-478 the chain carries Phosphothreonine. Phosphoserine is present on residues Ser-483 and Ser-543. The tract at residues 531-566 is disordered; sequence KEEESFNIQNSMSPKLEGGKGDQDDLGVNCLQNNLT.

Binds TNR and probably TNC. Interacts with ERBB3 and GOPC. Interacts with MDK; this interaction is independent of the presence of chondroitin sulfate chains and promotes elongation of oligodendroglial precursor-like cells. N-glycosylated. In terms of processing, O-glycosylated; contains chondroitin sulfate glycans. Part-time proteoglycan, expressed in part as a proteoglycan exhibiting chondroitin sulfate glycans and in part as a non-proteoglycan form. The relative amount of both forms depends on tissues and tissue maturation. In the cerebellum the 2 forms coexist while in the cerebrum the proteoglycan form is predominant. Post-translationally, phosphorylated; in intracellular and extracellular parts. As to expression, expressed in olfactory bulb, hippocampus, brain stem, spinal cord, cerebrum and cerebellum. Expressed by Purkinje cells in the cerebellum (at protein level). Expressed in immature and mature cerebellum (isoform 1, isoform 2 and isoform 3).

The protein resides in the cell membrane. It is found in the synaptic cell membrane. The protein localises to the endoplasmic reticulum membrane. Its subcellular location is the golgi apparatus membrane. It localises to the cell surface. The protein resides in the secreted. Functionally, may function as a growth and differentiation factor involved in neuritogenesis. May induce ERBB3 activation. This Mus musculus (Mouse) protein is Chondroitin sulfate proteoglycan 5 (Cspg5).